A 1333-amino-acid polypeptide reads, in one-letter code: Elongator complex protein 1 (1333 aa).

Ser-805, Ser-1172, and Ser-1175 each carry phosphoserine. The mediates dimerization stretch occupies residues 886–1333 (VDVNELFNHS…RSQWKLSLLE (448 aa)). The interval 1175–1209 (SGSEMSGRYSHSNSRISARSSKNRRKAERKKHSLK) is disordered. The required for binding to tRNA stretch occupies residues 1192–1210 (ARSSKNRRKAERKKHSLKE). Residues 1195 to 1207 (SKNRRKAERKKHS) show a composition bias toward basic residues.

This sequence belongs to the ELP1/IKA1 family. As to quaternary structure, homodimer; dimerization promotes ELP1 stability and elongator complex formation. Component of the elongator complex which consists of ELP1, ELP2, ELP3, ELP4, ELP5 and ELP6. Interacts preferentially with MAP3K14/NIK followed by IKK-alpha and IKK-beta. Phosphorylated. In the testis, expression is restricted to germ cells during spermatogenesis with no expression detected in somatic cells such as Sertoli cells or Leydig cells (at protein level). In the ovary, expressed in oocytes of primary, secondary and antral follicles (at protein level). Widely expressed in adult tissues with highest levels in brain and also expressed at all embryonic stages.

The protein resides in the cytoplasm. The protein localises to the nucleus. It functions in the pathway tRNA modification; 5-methoxycarbonylmethyl-2-thiouridine-tRNA biosynthesis. Functionally, component of the elongator complex which is required for multiple tRNA modifications, including mcm5U (5-methoxycarbonylmethyl uridine), mcm5s2U (5-methoxycarbonylmethyl-2-thiouridine), and ncm5U (5-carbamoylmethyl uridine). The elongator complex catalyzes the formation of carboxymethyluridine in the wobble base at position 34 in tRNAs. Regulates the migration and branching of projection neurons in the developing cerebral cortex, through a process depending on alpha-tubulin acetylation. ELP1 binds to tRNA, mediating interaction of the elongator complex with tRNA. May act as a scaffold protein that assembles active IKK-MAP3K14 complexes (IKKA, IKKB and MAP3K14/NIK). In Mus musculus (Mouse), this protein is Elongator complex protein 1 (Elp1).